A 117-amino-acid polypeptide reads, in one-letter code: ATP-dependent Clp protease adapter protein ClpS 1 (117 aa).

The protein belongs to the ClpS family. In terms of assembly, binds to the N-terminal domain of the chaperone ClpA.

Involved in the modulation of the specificity of the ClpAP-mediated ATP-dependent protein degradation. The protein is ATP-dependent Clp protease adapter protein ClpS 1 of Agrobacterium fabrum (strain C58 / ATCC 33970) (Agrobacterium tumefaciens (strain C58)).